Consider the following 327-residue polypeptide: Malate dehydrogenase (327 aa).

11-17 (GAAGQIG) lines the NAD(+) pocket. Residues R92 and R98 each coordinate substrate. Residues N105, Q112, and 129-131 (VGN) contribute to the NAD(+) site. 2 residues coordinate substrate: N131 and R162. H187 acts as the Proton acceptor in catalysis.

Belongs to the LDH/MDH superfamily. MDH type 2 family.

It carries out the reaction (S)-malate + NAD(+) = oxaloacetate + NADH + H(+). Functionally, catalyzes the reversible oxidation of malate to oxaloacetate. The polypeptide is Malate dehydrogenase (Leptospira biflexa serovar Patoc (strain Patoc 1 / Ames)).